The chain runs to 466 residues: Proline--tRNA ligase (466 aa).

Belongs to the class-II aminoacyl-tRNA synthetase family. ProS type 3 subfamily. In terms of assembly, homodimer.

It localises to the cytoplasm. It catalyses the reaction tRNA(Pro) + L-proline + ATP = L-prolyl-tRNA(Pro) + AMP + diphosphate. Catalyzes the attachment of proline to tRNA(Pro) in a two-step reaction: proline is first activated by ATP to form Pro-AMP and then transferred to the acceptor end of tRNA(Pro). The protein is Proline--tRNA ligase of Picrophilus torridus (strain ATCC 700027 / DSM 9790 / JCM 10055 / NBRC 100828 / KAW 2/3).